The sequence spans 181 residues: GMP synthase [glutamine-hydrolyzing] subunit A (181 aa).

Residues 2–181 enclose the Glutamine amidotransferase type-1 domain; the sequence is KILVVNNYGQ…FDNFLEICRR (180 aa). The active-site Nucleophile is the Cys72. Residues His159 and Glu161 contribute to the active site.

As to quaternary structure, heterodimer composed of a glutamine amidotransferase subunit (A) and a GMP-binding subunit (B).

The catalysed reaction is XMP + L-glutamine + ATP + H2O = GMP + L-glutamate + AMP + diphosphate + 2 H(+). The protein operates within purine metabolism; GMP biosynthesis; GMP from XMP (L-Gln route): step 1/1. Functionally, catalyzes the synthesis of GMP from XMP. The sequence is that of GMP synthase [glutamine-hydrolyzing] subunit A from Methanothrix thermoacetophila (strain DSM 6194 / JCM 14653 / NBRC 101360 / PT) (Methanosaeta thermophila).